We begin with the raw amino-acid sequence, 305 residues long: Nuclear egress protein 1 (305 aa).

A disordered region spans residues 1 to 42 (MYDIAPRRSGSRPGPGRDKTRRRSRFSAAGNPGVERRASRKS). A CCCH-type zinc finger spans residues 105 to 224 (CLTLSGMGYY…YVIFPGTSAH (120 aa)).

This sequence belongs to the herpesviridae NEC1 protein family. Forms a heterohexameric complex with NEC2. Interacts with capsid vertex specific component 2/CVC2; this interaction directs the capsid to the host inner nuclear membrane to initiate budding. Post-translationally, phosphorylated at serine residues in the N-terminus. This phosphorylation regulates the localization within the inner nuclear membrane.

It is found in the host nucleus inner membrane. In terms of biological role, plays an essential role in virion nuclear egress, the first step of virion release from infected cell. Within the host nucleus, NEC1 interacts with the newly formed capsid through the vertexes and directs it to the inner nuclear membrane by associating with NEC2. Induces the budding of the capsid at the inner nuclear membrane as well as its envelopment into the perinuclear space. There, the NEC1/NEC2 complex promotes the fusion of the enveloped capsid with the outer nuclear membrane and the subsequent release of the viral capsid into the cytoplasm where it will reach the secondary budding sites in the host Golgi or trans-Golgi network. The polypeptide is Nuclear egress protein 1 (Human herpesvirus 2 (strain HG52) (HHV-2)).